The following is a 332-amino-acid chain: Glycerol-3-phosphate dehydrogenase [NAD(P)+] (332 aa).

The NADPH site is built by tryptophan 13, arginine 33, and lysine 105. 3 residues coordinate sn-glycerol 3-phosphate: lysine 105, glycine 134, and serine 136. Alanine 138 is a binding site for NADPH. The sn-glycerol 3-phosphate site is built by lysine 189, aspartate 242, serine 252, arginine 253, and asparagine 254. Lysine 189 acts as the Proton acceptor in catalysis. Arginine 253 provides a ligand contact to NADPH. NADPH is bound at residue glutamate 279.

This sequence belongs to the NAD-dependent glycerol-3-phosphate dehydrogenase family.

Its subcellular location is the cytoplasm. The enzyme catalyses sn-glycerol 3-phosphate + NAD(+) = dihydroxyacetone phosphate + NADH + H(+). It carries out the reaction sn-glycerol 3-phosphate + NADP(+) = dihydroxyacetone phosphate + NADPH + H(+). It participates in membrane lipid metabolism; glycerophospholipid metabolism. Its function is as follows. Catalyzes the reduction of the glycolytic intermediate dihydroxyacetone phosphate (DHAP) to sn-glycerol 3-phosphate (G3P), the key precursor for phospholipid synthesis. The sequence is that of Glycerol-3-phosphate dehydrogenase [NAD(P)+] from Halorhodospira halophila (strain DSM 244 / SL1) (Ectothiorhodospira halophila (strain DSM 244 / SL1)).